Consider the following 173-residue polypeptide: NADH-ubiquinone oxidoreductase chain 6 (173 aa).

Helical transmembrane passes span methionine 1–serine 21, tyrosine 27–glycine 47, isoleucine 48–valine 68, valine 87–phenylalanine 107, and cysteine 139–leucine 159.

The protein belongs to the complex I subunit 6 family.

Its subcellular location is the mitochondrion membrane. The enzyme catalyses a ubiquinone + NADH + 5 H(+)(in) = a ubiquinol + NAD(+) + 4 H(+)(out). Its function is as follows. Core subunit of the mitochondrial membrane respiratory chain NADH dehydrogenase (Complex I) that is believed to belong to the minimal assembly required for catalysis. Complex I functions in the transfer of electrons from NADH to the respiratory chain. The immediate electron acceptor for the enzyme is believed to be ubiquinone. This is NADH-ubiquinone oxidoreductase chain 6 (MT-ND6) from Alca torda (Razorbill).